Reading from the N-terminus, the 667-residue chain is MNMTVEWSPQRTRATEQGQPLLRLAGVSRRFMAGDREFLALKDINLQIRAGELVAIIGASGSGKSTLMNILGCLDNASSGSYQVNGQETRDLDDDALAALRRDHFGFIFQRYHLLPHLDALRNVEIPAVYAGVPQAGRHQRARELLTRLGLAGHLANRPSQLSGGQQQRVSICRALMNGGEVILADEPTGALDTASGKEVMNILLELHAAGHTVILVTHDPKVAAHAERIIEVSDGQIVDDRRTVREVAKPVEEVQPAAERAPRRLVASLGLFREAFKMAWIALISHRMRTLLTMLGIIIGITSVVSISAIGEGAKGYVLKDIQAIGSNTIDIYSGKSFGDSRAKAIETLSPADVTALNELYYVDSATPVIGQGSLVRYRNIDADVQLNGVSEQYFQVRNIPLAEGIVFSADDARRQAQVVVIDHNTRKRLFAPGVEALGQVILVGSLPCTVIGVTAENKNLFVAGNSLNVWMPYETAAGRVLGQRHLDSISVRIKDGLPSKRVEEEVNKLMLQRHGTKDFFTNNLDSIMQTVQKTSRSLTLLLSLIAVISLVVGGIGVMNIMLVSVTERTREIGIRMAVGARQSDIRQQFLVEAVMVCLIGGVIGIGLSYGIGYLFALFVKQWEMVFSLGSIVTAFVCSTLIGIVFGFVPARNAARLDPIEALARD.

One can recognise an ABC transporter domain in the interval 22–260; that stretch reads LRLAGVSRRF…PVEEVQPAAE (239 aa). Position 58–65 (58–65) interacts with ATP; the sequence is GASGSGKS. 4 helical membrane passes run 292–312, 540–560, 601–621, and 630–650; these read LLTM…SAIG, LTLL…IGVM, IGGV…ALFV, and LGSI…FGFV.

This sequence belongs to the ABC transporter superfamily. Macrolide exporter (TC 3.A.1.122) family. Probably part of a tripartite efflux system, which is composed of an inner membrane transporter, a periplasmic membrane fusion protein, and an outer membrane component.

It is found in the cell inner membrane. Its function is as follows. Probably part of a tripartite efflux system. The protein is Probable export ATP-binding/permease protein MacB of Pseudomonas entomophila (strain L48).